Here is a 103-residue protein sequence, read N- to C-terminus: Heme-copper oxidase subunit 4 (103 aa).

The next 3 helical transmembrane spans lie at 20 to 40 (VWIVLVASAVAEVYLVLEGIA), 42 to 62 (NPFVFVLAVALFQSSLIALFF), and 75 to 95 (ITVSGAVLIAILIISAVTSVL).

The protein localises to the cell membrane. In Aeropyrum pernix (strain ATCC 700893 / DSM 11879 / JCM 9820 / NBRC 100138 / K1), this protein is Heme-copper oxidase subunit 4 (aoxC).